Consider the following 3912-residue polypeptide: Chondramide synthase cmdD (3912 aa).

Residues 1411-1485 enclose the Carrier 1 domain; the sequence is APRNAREETL…ALAEVASASK (75 aa). S1446 is subject to O-(pantetheine 4'-phosphoryl)serine. The segment covering 1995–2029 has biased composition (acidic residues); it reads ADEDDEEDDELDEEFDAEVDEEDEDEEEEEDDDGE. Residues 1995 to 2030 are disordered; it reads ADEDDEEDDELDEEFDAEVDEEDEDEEEEEDDDGEN. A Carrier 2 domain is found at 2989 to 3064; that stretch reads APRTATEETL…VLARVIDEAL (76 aa). S3024 is modified (O-(pantetheine 4'-phosphoryl)serine).

It belongs to the ATP-dependent AMP-binding enzyme family. The cofactor is pantetheine 4'-phosphate.

Involved in the synthesis of chondramides. Activates R-beta-tyrosine and probably phenylalanine. The protein is Chondramide synthase cmdD of Chondromyces crocatus.